The sequence spans 851 residues: Putative cell signaling protein (851 aa).

Basic and acidic residues-rich tracts occupy residues 165-176 (KLNEQDGKKSDN), 196-223 (DQAR…EETK), and 767-781 (SEER…LSHD). Disordered regions lie at residues 165–223 (KLNE…EETK) and 714–781 (DDSE…LSHD).

Palmitoylated.

This is Putative cell signaling protein from Schizosaccharomyces pombe (strain 972 / ATCC 24843) (Fission yeast).